The chain runs to 95 residues: uncharacterized protein (95 aa).

Basic and acidic residues-rich tracts occupy residues 1–28 (MRRA…KERC) and 41–53 (DERV…KGRP). A disordered region spans residues 1–73 (MRRAEVKRSA…RTSRAGSSWQ (73 aa)).

This is an uncharacterized protein from Homo sapiens (Human).